Consider the following 240-residue polypeptide: Ribonuclease P protein component 3 (240 aa).

The protein belongs to the eukaryotic/archaeal RNase P protein component 3 family. As to quaternary structure, consists of a catalytic RNA component and at least 4-5 protein subunits.

Its subcellular location is the cytoplasm. It carries out the reaction Endonucleolytic cleavage of RNA, removing 5'-extranucleotides from tRNA precursor.. Functionally, part of ribonuclease P, a protein complex that generates mature tRNA molecules by cleaving their 5'-ends. This Halorubrum lacusprofundi (strain ATCC 49239 / DSM 5036 / JCM 8891 / ACAM 34) protein is Ribonuclease P protein component 3.